A 323-amino-acid polypeptide reads, in one-letter code: 1D-myo-inositol 2-acetamido-2-deoxy-alpha-D-glucopyranoside deacetylase 1 (323 aa).

The Zn(2+) site is built by H30, D33, and H165.

It belongs to the MshB deacetylase family. Zn(2+) serves as cofactor.

The catalysed reaction is 1D-myo-inositol 2-acetamido-2-deoxy-alpha-D-glucopyranoside + H2O = 1D-myo-inositol 2-amino-2-deoxy-alpha-D-glucopyranoside + acetate. Catalyzes the deacetylation of 1D-myo-inositol 2-acetamido-2-deoxy-alpha-D-glucopyranoside (GlcNAc-Ins) in the mycothiol biosynthesis pathway. In Catenulispora acidiphila (strain DSM 44928 / JCM 14897 / NBRC 102108 / NRRL B-24433 / ID139908), this protein is 1D-myo-inositol 2-acetamido-2-deoxy-alpha-D-glucopyranoside deacetylase 1.